The sequence spans 663 residues: Transmembrane 9 superfamily member 2 (663 aa).

An N-terminal signal peptide occupies residues 1–28; that stretch reads MSARLPVLSPPRWPRLLLLSLLLLGAVP. Over 29–300 the chain is Lumenal; sequence GPRRSGGFYL…LESMPHTHIQ (272 aa). A helical membrane pass occupies residues 301–321; that stretch reads WFSIMNSLVIVLFLSGMVAMI. Topologically, residues 322–374 are cytoplasmic; sequence MLRTLHKDIARYNQMDSTEDAQEEFGWKLVHGDIFRPPRKGMLLSVFLGSGTQ. Residues 375-395 traverse the membrane as a helical segment; it reads ILIMTFVTLFFACLGFLSPAN. Topologically, residues 396 to 398 are lumenal; that stretch reads RGA. Residues 399-419 traverse the membrane as a helical segment; it reads LMTCAVVLWVLLGTPAGYVAA. At 420-437 the chain is on the cytoplasmic side; sequence RFYKSFGGEKWKTNVLLT. A helical transmembrane segment spans residues 438 to 458; it reads SFLCPGIVFADFFIMNLILWG. At 459 to 466 the chain is on the lumenal side; that stretch reads EGSSAAIP. Residues 467–487 traverse the membrane as a helical segment; that stretch reads FGTLVAILALWFCISVPLTFI. The Cytoplasmic segment spans residues 488–522; the sequence is GAYFGFKKNAIEHPVRTNQIPRQIPEQSFYTKPLP. Residues 523–543 form a helical membrane-spanning segment; that stretch reads GIIMGGILPFGCIFIQLFFIL. The Lumenal portion of the chain corresponds to 544–554; it reads NSIWSHQMYYM. Residues 555–575 form a helical membrane-spanning segment; it reads FGFLFLVFIILVITCSEATIL. At 576–591 the chain is on the cytoplasmic side; the sequence is LCYFHLCAEDYHWQWR. Residues 592–612 traverse the membrane as a helical segment; it reads SFLTSGFTAVYFLIYAVHYFF. Residues 613-631 lie on the Lumenal side of the membrane; sequence SKLQITGTASTILYFGYTM. Residues 632 to 652 traverse the membrane as a helical segment; that stretch reads IMVLIFFLFTGTIGFFACFWF. The Cytoplasmic portion of the chain corresponds to 653–663; that stretch reads VTKIYSVVKVD.

This sequence belongs to the nonaspanin (TM9SF) (TC 9.A.2) family.

It is found in the endosome membrane. The protein localises to the golgi outpost. The protein resides in the cytoplasm. It localises to the cytoskeleton. Its subcellular location is the microtubule organizing center. Functionally, in the intracellular compartments, may function as a channel or small molecule transporter. In Pongo abelii (Sumatran orangutan), this protein is Transmembrane 9 superfamily member 2 (TM9SF2).